The following is a 315-amino-acid chain: MGRWVNQSYTDGFFLLGIFSHSQTDLVLFSAVMVVFTVALCGNVLLIFLIYLDAGLHTPMYFFLSQLSLMDLMLVCNIVPKMAANFLSGRKSISFVGCGIQIGFFVSLVGSEGLLLGLMAYDRYVAVSHPLHYPILMNQRVCLQITGSSWAFGIIDGVIQMVAAMGLPYCGSRSVDHFFCEVQALLKLACADTSLFDTLLFACCVFMLLLPFSIIMASYACILGAVLRIRSAQAWKKALATCSSHLTAVTLFYGAAMFMYLRPRRYRAPSHDKVASIFYTVLTPMLNPLIYSLRNGEVMGALRKGLDRCRIGSQH.

The Extracellular segment spans residues 1 to 31 (MGRWVNQSYTDGFFLLGIFSHSQTDLVLFSA). A glycan (N-linked (GlcNAc...) asparagine) is linked at asparagine 6. Residues 32 to 52 (VMVVFTVALCGNVLLIFLIYL) traverse the membrane as a helical segment. At 53-58 (DAGLHT) the chain is on the cytoplasmic side. The helical transmembrane segment at 59–79 (PMYFFLSQLSLMDLMLVCNIV) threads the bilayer. Residues 80 to 99 (PKMAANFLSGRKSISFVGCG) lie on the Extracellular side of the membrane. A disulfide bridge connects residues cysteine 98 and cysteine 180. The helical transmembrane segment at 100-120 (IQIGFFVSLVGSEGLLLGLMA) threads the bilayer. Residues 121 to 149 (YDRYVAVSHPLHYPILMNQRVCLQITGSS) are Cytoplasmic-facing. The helical transmembrane segment at 150 to 170 (WAFGIIDGVIQMVAAMGLPYC) threads the bilayer. At 171–198 (GSRSVDHFFCEVQALLKLACADTSLFDT) the chain is on the extracellular side. Residues 199 to 219 (LLFACCVFMLLLPFSIIMASY) traverse the membrane as a helical segment. The Cytoplasmic segment spans residues 220–238 (ACILGAVLRIRSAQAWKKA). The chain crosses the membrane as a helical span at residues 239-259 (LATCSSHLTAVTLFYGAAMFM). The Extracellular portion of the chain corresponds to 260–272 (YLRPRRYRAPSHD). Residues 273 to 293 (KVASIFYTVLTPMLNPLIYSL) form a helical membrane-spanning segment. At 294–315 (RNGEVMGALRKGLDRCRIGSQH) the chain is on the cytoplasmic side.

This sequence belongs to the G-protein coupled receptor 1 family.

The protein localises to the cell membrane. In terms of biological role, odorant receptor. This chain is Olfactory receptor 2V1 (OR2V1), found in Homo sapiens (Human).